Here is a 351-residue protein sequence, read N- to C-terminus: Uroporphyrinogen decarboxylase (351 aa).

Substrate-binding positions include 25-29 (RQAGR), Asp74, Tyr151, Ser206, and His325.

It belongs to the uroporphyrinogen decarboxylase family. Homodimer.

The protein resides in the cytoplasm. It carries out the reaction uroporphyrinogen III + 4 H(+) = coproporphyrinogen III + 4 CO2. It participates in porphyrin-containing compound metabolism; protoporphyrin-IX biosynthesis; coproporphyrinogen-III from 5-aminolevulinate: step 4/4. Functionally, catalyzes the decarboxylation of four acetate groups of uroporphyrinogen-III to yield coproporphyrinogen-III. The polypeptide is Uroporphyrinogen decarboxylase (Chlorobium limicola (strain DSM 245 / NBRC 103803 / 6330)).